Consider the following 453-residue polypeptide: Ribulose bisphosphate carboxylase large chain (453 aa).

A propeptide spanning residues 1–2 (MS) is cleaved from the precursor. Proline 3 is modified (N-acetylproline). Lysine 14 carries the N6,N6,N6-trimethyllysine modification. The substrate site is built by asparagine 123 and threonine 173. Lysine 175 functions as the Proton acceptor in the catalytic mechanism. Lysine 177 lines the substrate pocket. 3 residues coordinate Mg(2+): lysine 201, aspartate 203, and glutamate 204. Position 201 is an N6-carboxylysine (lysine 201). The active-site Proton acceptor is the histidine 294. The substrate site is built by arginine 295, histidine 327, and serine 379.

This sequence belongs to the RuBisCO large chain family. Type I subfamily. In terms of assembly, heterohexadecamer of 8 large chains and 8 small chains; disulfide-linked. The disulfide link is formed within the large subunit homodimers. Requires Mg(2+) as cofactor. The disulfide bond which can form in the large chain dimeric partners within the hexadecamer appears to be associated with oxidative stress and protein turnover.

Its subcellular location is the plastid. It is found in the chloroplast. It carries out the reaction 2 (2R)-3-phosphoglycerate + 2 H(+) = D-ribulose 1,5-bisphosphate + CO2 + H2O. The enzyme catalyses D-ribulose 1,5-bisphosphate + O2 = 2-phosphoglycolate + (2R)-3-phosphoglycerate + 2 H(+). In terms of biological role, ruBisCO catalyzes two reactions: the carboxylation of D-ribulose 1,5-bisphosphate, the primary event in carbon dioxide fixation, as well as the oxidative fragmentation of the pentose substrate in the photorespiration process. Both reactions occur simultaneously and in competition at the same active site. This is Ribulose bisphosphate carboxylase large chain from Galium album (White bedstraw).